A 369-amino-acid polypeptide reads, in one-letter code: Sulfate permease 2, chloroplastic (369 aa).

A disordered region spans residues 1-21 (MASTTLLQPALGLPSRVGPRS). The transit peptide at 1 to 82 (MASTTLLQPA…QQSRGDLLVS (82 aa)) directs the protein to the chloroplast. The next 5 helical transmembrane spans lie at 110 to 130 (VGVA…NVFV), 156 to 176 (TLML…VAAI), 187 to 207 (VFLM…TGLM), 229 to 249 (VVFA…PFVV), and 335 to 355 (TEAA…TLWI). Residues 153–356 (LKMTLMLAFV…ALALGTLWIK (204 aa)) enclose the ABC transmembrane type-1 domain.

It belongs to the ATP-binding cassette (ABC) (TC 3.A.1) superfamily. In terms of assembly, part of the chloroplast sulfate permease holocomplex. May form a heterodimer with SLUP1.

It localises to the plastid. The protein localises to the chloroplast membrane. Functionally, part of the ABC-type chloroplast envelope-localized sulfate transporter. The protein is Sulfate permease 2, chloroplastic (SULP2) of Chlamydomonas reinhardtii (Chlamydomonas smithii).